A 255-amino-acid polypeptide reads, in one-letter code: 5-oxoprolinase subunit A (255 aa).

This sequence belongs to the LamB/PxpA family. As to quaternary structure, forms a complex composed of PxpA, PxpB and PxpC.

The catalysed reaction is 5-oxo-L-proline + ATP + 2 H2O = L-glutamate + ADP + phosphate + H(+). Functionally, catalyzes the cleavage of 5-oxoproline to form L-glutamate coupled to the hydrolysis of ATP to ADP and inorganic phosphate. The chain is 5-oxoprolinase subunit A from Clostridium kluyveri (strain ATCC 8527 / DSM 555 / NBRC 12016 / NCIMB 10680 / K1).